The following is a 1022-amino-acid chain: D-2-hydroxyglutarate dehydrogenase (1022 aa).

The FAD-binding PCMH-type domain maps to 53 to 286 (YQLLPDAVLF…SEARLDITPL (234 aa)). Positions 407 and 505 each coordinate (R)-2-hydroxyglutarate. One can recognise a 4Fe-4S ferredoxin-type domain in the interval 667–700 (FSHEVKEAMSGCLACKACSTQCPIKIDVPAFRSR). Residues Cys-678, Cys-681, Cys-684, and Cys-688 each coordinate [4Fe-4S] cluster.

In the N-terminal section; belongs to the FAD-binding oxidoreductase/transferase type 4 family. As to quaternary structure, homotetramer. [4Fe-4S] cluster serves as cofactor. The cofactor is FAD.

The enzyme catalyses (R)-2-hydroxyglutarate + A = 2-oxoglutarate + AH2. Activity is completely inhibited by the addition of 0.5 mM Mn(2+), Ni(2+), or Co(2+) and partially inhibited by 0.5 mM Zn(2+). Functionally, catalyzes the oxidation of D-2-hydroxyglutarate (D-2-HGA) to 2-oxoglutarate. Appears to be the only D2HGDH in P.ananatis, providing the way to recycle D-2-HGA produced during L-serine synthesis by SerA, by converting it back to 2-oxoglutarate. Is involved in the utilization of D-2-HGA, that can support the growth of P.ananatis as a sole carbon source, although it barely serves as a good substrate. The physiological molecule that functions as the primary electron acceptor during D-2-HGA oxidation by YdiJ in P.ananatis is unknown. Shows strict substrate specificity towards D-2-HGA, since it has no detectable activity on L-2-hydroxyglutarate, L-malate, D-malate, L-lactate, D-lactate, L-tartrate, D-tartrate, L-glycerate, D-glycerate, glutarate, or pyruvate. This is D-2-hydroxyglutarate dehydrogenase from Pantoea ananatis (strain AJ13355).